The chain runs to 464 residues: NADH-ubiquinone oxidoreductase chain 4 (464 aa).

Helical transmembrane passes span 1-21, 63-83, 98-118, 119-139, 152-172, 197-217, 227-247, 261-281, 288-308, 314-334, 355-375, 389-409, and 443-463; these read MMITLILFTTGIVMTTLVIPQ, SISAPLIALSCWLAPISLIAS, FIIIVIFIAGALIITFSALEL, LLFYVAFETTLIPTLILITRW, FMFYTLFGSLPLLISLIAIYI, IWWALSIIAFLIKMPIYGFHL, PVAGSMILAAILLKLGGYGLI, LSLALITFCSWGALVTSIICV, ALIAYSSVGHMSIVAAAIFSS, NGALILMIAYGLVSSDLFSLA, ILPLSTLWWLVMSAANLGLPP, LIAWSIWLFPIIGLATIFGAI, and LHTLPLILIIINPISALITWL.

It belongs to the complex I subunit 4 family.

The protein resides in the mitochondrion membrane. The catalysed reaction is a ubiquinone + NADH + 5 H(+)(in) = a ubiquinol + NAD(+) + 4 H(+)(out). Functionally, core subunit of the mitochondrial membrane respiratory chain NADH dehydrogenase (Complex I) that is believed to belong to the minimal assembly required for catalysis. Complex I functions in the transfer of electrons from NADH to the respiratory chain. The immediate electron acceptor for the enzyme is believed to be ubiquinone. This Paracentrotus lividus (Common sea urchin) protein is NADH-ubiquinone oxidoreductase chain 4 (ND4).